We begin with the raw amino-acid sequence, 80 residues long: Exodeoxyribonuclease 7 small subunit (80 aa).

The protein belongs to the XseB family. Heterooligomer composed of large and small subunits.

It localises to the cytoplasm. It catalyses the reaction Exonucleolytic cleavage in either 5'- to 3'- or 3'- to 5'-direction to yield nucleoside 5'-phosphates.. Functionally, bidirectionally degrades single-stranded DNA into large acid-insoluble oligonucleotides, which are then degraded further into small acid-soluble oligonucleotides. This chain is Exodeoxyribonuclease 7 small subunit, found in Escherichia coli (strain SE11).